The following is a 523-amino-acid chain: Frizzled-4 (523 aa).

Positions 1–22 (MGARSLTLLYLLCCLVVGLIAG) are cleaved as a signal peptide. The Extracellular segment spans residues 23 to 198 (FGEEEERSCD…KCGYDSGLYN (176 aa)). The FZ domain maps to 26–147 (EEERSCDPIR…NDHNHMCMEG (122 aa)). Cystine bridges form between C31–C92, C39–C85, C76–C114, C103–C144, C107–C131, C167–C186, C190–C268, and C288–C363. N-linked (GlcNAc...) asparagine glycosylation occurs at N45. An N-linked (GlcNAc...) asparagine glycan is attached at N130. Residues 199-229 (RLSKEFTDIWMAVWASLCFISTAFTVLTFLI) form a helical membrane-spanning segment. The Cytoplasmic segment spans residues 230-235 (DSSRFC). Residues 236 to 261 (YPERPIIFLSMCYNIYSIAYIVRLTV) traverse the membrane as a helical segment. The Extracellular segment spans residues 262 to 285 (GRERISCDFEEAAEPVLIQEGLKN). A helical membrane pass occupies residues 286–319 (TGCAIIFLLMYFFGMASSIWWVILTLTWFLAAGL). The Cytoplasmic portion of the chain corresponds to 320–322 (KWG). Residues 323 to 351 (HEAIEMHSSYFHIAAWAIPAVKTIVILIM) traverse the membrane as a helical segment. Topologically, residues 352-369 (RLVDADELTGLCYVGNQN) are extracellular. Residues 370–396 (IDALTGFVVAPLFTYLVIGTLFIAAGL) form a helical membrane-spanning segment. The Cytoplasmic portion of the chain corresponds to 397-417 (VALFKIRSNLQKDGTKTDKLE). Residues 418-443 (RLMVKIGVFSVLYTVPATCVIACYFY) form a helical membrane-spanning segment. The Extracellular portion of the chain corresponds to 444-459 (EVSNWNVFRYTADDSN). The chain crosses the membrane as a helical span at residues 460–481 (MAVEMLNIFMSLLVGITSGMWI). Residues 482 to 523 (WSAKTLHTWQKCTNRLVNSGKVKRKKRVDGWVKPGKGNETVV) lie on the Cytoplasmic side of the membrane. The Lys-Thr-X-X-X-Trp motif, mediates interaction with the PDZ domain of Dvl family members motif lies at 485 to 490 (KTLHTW). The short motif at 521-523 (TVV) is the PDZ-binding element.

Belongs to the G-protein coupled receptor Fz/Smo family. Interacts (via FZ domain) with tsku; tsku competes with wnt2b for binding to fzd4, inhibiting Wnt signaling and repressing peripheral eye development.

It localises to the cell membrane. Receptor for Wnt proteins. Most frizzled receptors are coupled to the beta-catenin canonical signaling pathway, which leads to the activation of disheveled proteins, inhibition of GSK-3 kinase, nuclear accumulation of beta-catenin and activation of Wnt target genes. A second signaling pathway involving PKC and calcium fluxes has been seen for some family members, but it is not yet clear if it represents a distinct pathway or if it can be integrated in the canonical pathway, as PKC seems to be required for Wnt-mediated inactivation of GSK-3 kinase. Both pathways seem to involve interactions with G-proteins. May be involved in transduction and intercellular transmission of polarity information during tissue morphogenesis and/or in differentiated tissues. Activated by Wnt5A. This is Frizzled-4 (fzd4) from Xenopus laevis (African clawed frog).